A 120-amino-acid polypeptide reads, in one-letter code: Phosphoribosyl-AMP cyclohydrolase (120 aa).

D75 lines the Mg(2+) pocket. C76 is a binding site for Zn(2+). Positions 77 and 79 each coordinate Mg(2+). Zn(2+) contacts are provided by C92 and C99.

Belongs to the PRA-CH family. Homodimer. Mg(2+) is required as a cofactor. Requires Zn(2+) as cofactor.

The protein localises to the cytoplasm. It carries out the reaction 1-(5-phospho-beta-D-ribosyl)-5'-AMP + H2O = 1-(5-phospho-beta-D-ribosyl)-5-[(5-phospho-beta-D-ribosylamino)methylideneamino]imidazole-4-carboxamide. It participates in amino-acid biosynthesis; L-histidine biosynthesis; L-histidine from 5-phospho-alpha-D-ribose 1-diphosphate: step 3/9. Functionally, catalyzes the hydrolysis of the adenine ring of phosphoribosyl-AMP. In Methanosarcina mazei (strain ATCC BAA-159 / DSM 3647 / Goe1 / Go1 / JCM 11833 / OCM 88) (Methanosarcina frisia), this protein is Phosphoribosyl-AMP cyclohydrolase.